A 135-amino-acid polypeptide reads, in one-letter code: Small ribosomal subunit protein uS12 (135 aa).

A disordered region spans residues 1 to 20 (MPTINQLVRKGRHSKVTKSK). Basic residues predominate over residues 9–18 (RKGRHSKVTK). D102 is modified (3-methylthioaspartic acid).

Belongs to the universal ribosomal protein uS12 family. In terms of assembly, part of the 30S ribosomal subunit. Contacts proteins S8 and S17. May interact with IF1 in the 30S initiation complex.

With S4 and S5 plays an important role in translational accuracy. Functionally, interacts with and stabilizes bases of the 16S rRNA that are involved in tRNA selection in the A site and with the mRNA backbone. Located at the interface of the 30S and 50S subunits, it traverses the body of the 30S subunit contacting proteins on the other side and probably holding the rRNA structure together. The combined cluster of proteins S8, S12 and S17 appears to hold together the shoulder and platform of the 30S subunit. The polypeptide is Small ribosomal subunit protein uS12 (Lactobacillus helveticus (strain DPC 4571)).